The following is a 175-amino-acid chain: Lactobacillus up-regulated protein (175 aa).

An N-terminal signal peptide occupies residues 1-18; that stretch reads MRSIFLAVLGLMATSSLA. N-linked (GlcNAc...) asparagine glycosylation occurs at asparagine 59.

This is Lactobacillus up-regulated protein (lbuA) from Emericella nidulans (strain FGSC A4 / ATCC 38163 / CBS 112.46 / NRRL 194 / M139) (Aspergillus nidulans).